The chain runs to 421 residues: WD repeat and SOCS box-containing protein 1 (421 aa).

6 WD repeats span residues 32-71, 124-165, 168-208, 212-251, 254-293, and 309-346; these read KCGR…QNFL, SRCV…LLLN, DHTE…NMMK, GHQN…MIRK, GHHH…ILME, and ANDR…DYPV. Residues 372-421 form the SOCS box domain; sequence DGSVYFWATPRQVPSLQHLCRMSIRRVMPTQEVQELPIPSKLLEFLSYRI.

In terms of assembly, interacts with DIO2. Component of the probable ECS(WSB1) E3 ubiquitin ligase complex which contains CUL5, RNF7/RBX2, Elongin BC complex and WSB1. Component of a probable ECS-like E3 ubiquitin-protein ligase complex which contains CUL5, RBX1, Elongin BC complex and WSB1. Interacts with CUL5, RNF7, ELOB and ELOC. Binds to HIPK2 through WD40 repeats.

It functions in the pathway protein modification; protein ubiquitination. Probable substrate-recognition component of a SCF-like ECS (Elongin-Cullin-SOCS-box protein) E3 ubiquitin ligase complex which mediates the ubiquitination and subsequent proteasomal degradation of target proteins. Recognizes type II iodothyronine deiodinase/DIO2. Confers constitutive instability to HIPK2 through proteasomal degradation. In Homo sapiens (Human), this protein is WD repeat and SOCS box-containing protein 1 (WSB1).